A 1865-amino-acid chain; its full sequence is Dedicator of cytokinesis protein 1 (1865 aa).

The SH3 domain maps to 9–70; it reads REEKYGVAFY…PASYIHLKEA (62 aa). The 185-residue stretch at 425-609 folds into the C2 DOCK-type domain; that stretch reads RNDIYVTLVQ…DSFQISTLVC (185 aa). The DOCKER domain maps to 1207–1617; the sequence is YKEIEREEMY…VEKEYGVRIM (411 aa). 2 disordered regions span residues 1619–1716 and 1732–1865; these read SSLD…EFKP and TISP…GIVQ. The span at 1639–1666 shows a compositional bias: low complexity; the sequence is PSSSRPLSVASVSSLSSDSTPSRPGSDG. Residues 1680-1694 are compositionally biased toward basic and acidic residues; that stretch reads RSQDKLDKDDLEKEK. A Phosphoserine modification is found at serine 1681. A phosphoinositide-binding region spans residues 1687–1695; it reads KDDLEKEKK. Residues 1695–1704 are compositionally biased toward basic residues; that stretch reads KDKKKEKRNS. A compositionally biased stretch (basic and acidic residues) spans 1705–1716; it reads KHQEIFEKEFKP. Residues serine 1743, serine 1751, serine 1756, serine 1761, and serine 1764 each carry the phosphoserine modification. The span at 1756 to 1766 shows a compositional bias: low complexity; that stretch reads SVSPSSPSSQQ. A phosphothreonine mark is found at threonine 1767 and threonine 1772. Residues 1793–1819 are interaction with NCK2 second and third SH3 domain (minor); sequence ADVADVPPPLPLKGSVADYGNLMENQD. The SH3-binding; interaction with CRK motif lies at 1799-1805; the sequence is PPPLPLK. The segment at 1820 to 1836 is interaction with NCK2 third SH3 domain (major); sequence LLGSPTPPPPPPHQRHL. The segment covering 1824-1851 has biased composition (pro residues); sequence PTPPPPPPHQRHLPPPLPSKTPPPPPPK. Positions 1837–1852 are interaction with NCK2 (minor); it reads PPPLPSKTPPPPPPKT. The SH3-binding; interaction with CRK signature appears at 1838 to 1843; sequence PPLPSK. Residues 1855–1865 are compositionally biased toward polar residues; that stretch reads KQASVDSGIVQ. Position 1858 is a phosphoserine (serine 1858).

It belongs to the DOCK family. In terms of assembly, interacts with the SH3 domains of CRK and NCK2 via multiple sites. Interacts with nucleotide-free RAC1 via its DOCKER domain. Interacts with ELMO1, ELMO2 and probably ELMO3 via its SH3 domain. Interacts with ADGRB1. Identified in a complex with AUTS2 and ELMO2. As to expression, highly expressed in placenta, lung, kidney, pancreas and ovary. Expressed at intermediate level in thymus, testes and colon.

It is found in the cytoplasm. The protein resides in the membrane. Involved in cytoskeletal rearrangements required for phagocytosis of apoptotic cells and cell motility. Along with DOCK1, mediates CRK/CRKL regulation of epithelial and endothelial cell spreading and migration on type IV collagen. Functions as a guanine nucleotide exchange factor (GEF), which activates Rac Rho small GTPases by exchanging bound GDP for free GTP. Its GEF activity may be enhanced by ELMO1. The protein is Dedicator of cytokinesis protein 1 (DOCK1) of Homo sapiens (Human).